The following is a 300-amino-acid chain: Fructose-bisphosphate aldolase class 1 (300 aa).

The active-site Proton acceptor is the Glu-181. The active-site Schiff-base intermediate with dihydroxyacetone-P is the Lys-218.

It belongs to the class I fructose-bisphosphate aldolase family.

It catalyses the reaction beta-D-fructose 1,6-bisphosphate = D-glyceraldehyde 3-phosphate + dihydroxyacetone phosphate. Its pathway is carbohydrate degradation; glycolysis; D-glyceraldehyde 3-phosphate and glycerone phosphate from D-glucose: step 4/4. The polypeptide is Fructose-bisphosphate aldolase class 1 (fda) (Synechocystis sp. (strain ATCC 27184 / PCC 6803 / Kazusa)).